The chain runs to 144 residues: Small polypeptide DEVIL 18 (144 aa).

The segment covering 30–58 (SFSTKTSSSSSKPVFTRSFSTKPTSYSSS) has biased composition (low complexity). A disordered region spans residues 30 to 89 (SFSTKTSSSSSKPVFTRSFSTKPTSYSSSEPIFRRSFSAKPTSSKSPFLSRSGSTKCPVD). A helical membrane pass occupies residues 42-58 (PVFTRSFSTKPTSYSSS). The span at 68-84 (AKPTSSKSPFLSRSGST) shows a compositional bias: polar residues. The segment at 108 to 139 (SVTRKCRNMAKEHKSRFYIMKRCVLMLVCWHK) is required for DVL/RTFL small polypeptide activity.

It belongs to the DVL/RTFL small polypeptides family.

Its subcellular location is the cell membrane. Its function is as follows. Small polypeptide acting as a regulatory molecule which coordinates cellular responses required for differentiation, growth and development, probably by restricting polar cell proliferation in lateral organs and coordinating socket cell recruitment and differentiation at trichome sites. This Arabidopsis thaliana (Mouse-ear cress) protein is Small polypeptide DEVIL 18.